A 374-amino-acid polypeptide reads, in one-letter code: Tryptophan--tRNA ligase (374 aa).

The short motif at 71–79 is the 'HIGH' region element; the sequence is PSGRMHLGH. Residues 247–251 carry the 'KMSKS' region motif; that stretch reads KMSSS.

Belongs to the class-I aminoacyl-tRNA synthetase family.

The protein localises to the cytoplasm. It catalyses the reaction tRNA(Trp) + L-tryptophan + ATP = L-tryptophyl-tRNA(Trp) + AMP + diphosphate + H(+). This is Tryptophan--tRNA ligase from Methanopyrus kandleri (strain AV19 / DSM 6324 / JCM 9639 / NBRC 100938).